The chain runs to 348 residues: Protein pelota homolog (348 aa).

The protein belongs to the eukaryotic release factor 1 family. Pelota subfamily. In terms of assembly, monomer. A divalent metal cation is required as a cofactor.

It is found in the cytoplasm. Functionally, may function in recognizing stalled ribosomes, interact with stem-loop structures in stalled mRNA molecules, and effect endonucleolytic cleavage of the mRNA. May play a role in the release non-functional ribosomes and degradation of damaged mRNAs. Has endoribonuclease activity. This Methanococcus maripaludis (strain C6 / ATCC BAA-1332) protein is Protein pelota homolog.